The following is a 400-amino-acid chain: Axin-like protein 1 (400 aa).

In terms of domain architecture, RGS spans 4–132; the sequence is RSKFSIDRVL…TTTADVNTTW (129 aa). 2 disordered regions span residues 190–233 and 278–306; these read QETK…TLKV and GTLE…GSEA. The span at 194–210 shows a compositional bias: basic and acidic residues; sequence NSSETEEHAESPRKEKS. Residues 287-298 are compositionally biased toward polar residues; that stretch reads FTGTNNGFSTLQ. The 88-residue stretch at 305-392 folds into the DIX domain; it reads EAPKMTVELR…RITAICRMCP (88 aa).

As to quaternary structure, interacts with bar-1, dsh-2, gsk-3, and mig-5.

Works in parallel with pry-1 in negatively regulating bar-1 signaling in vulval precursor cells and Q neuroblasts. Shown to have a role in excretory cell development. This Caenorhabditis elegans protein is Axin-like protein 1.